We begin with the raw amino-acid sequence, 337 residues long: Holliday junction branch migration complex subunit RuvB (337 aa).

A large ATPase domain (RuvB-L) region spans residues 1 to 182 (MSEEKSVLRD…FGAVFRLSYY (182 aa)). Residues Leu21, Arg22, Gly63, Lys66, Thr67, Thr68, 129-131 (EDY), Arg172, Tyr182, and Arg219 contribute to the ATP site. Thr67 serves as a coordination point for Mg(2+). A small ATPAse domain (RuvB-S) region spans residues 183 to 253 (KLEEIKQIVR…ITQLALTKLG (71 aa)). A head domain (RuvB-H) region spans residues 256-337 (HKGLDASDYL…VKYYKGLLDN (82 aa)). DNA is bound by residues Arg311 and Arg316.

This sequence belongs to the RuvB family. Homohexamer. Forms an RuvA(8)-RuvB(12)-Holliday junction (HJ) complex. HJ DNA is sandwiched between 2 RuvA tetramers; dsDNA enters through RuvA and exits via RuvB. An RuvB hexamer assembles on each DNA strand where it exits the tetramer. Each RuvB hexamer is contacted by two RuvA subunits (via domain III) on 2 adjacent RuvB subunits; this complex drives branch migration. In the full resolvosome a probable DNA-RuvA(4)-RuvB(12)-RuvC(2) complex forms which resolves the HJ.

Its subcellular location is the cytoplasm. The enzyme catalyses ATP + H2O = ADP + phosphate + H(+). Its function is as follows. The RuvA-RuvB-RuvC complex processes Holliday junction (HJ) DNA during genetic recombination and DNA repair, while the RuvA-RuvB complex plays an important role in the rescue of blocked DNA replication forks via replication fork reversal (RFR). RuvA specifically binds to HJ cruciform DNA, conferring on it an open structure. The RuvB hexamer acts as an ATP-dependent pump, pulling dsDNA into and through the RuvAB complex. RuvB forms 2 homohexamers on either side of HJ DNA bound by 1 or 2 RuvA tetramers; 4 subunits per hexamer contact DNA at a time. Coordinated motions by a converter formed by DNA-disengaged RuvB subunits stimulates ATP hydrolysis and nucleotide exchange. Immobilization of the converter enables RuvB to convert the ATP-contained energy into a lever motion, pulling 2 nucleotides of DNA out of the RuvA tetramer per ATP hydrolyzed, thus driving DNA branch migration. The RuvB motors rotate together with the DNA substrate, which together with the progressing nucleotide cycle form the mechanistic basis for DNA recombination by continuous HJ branch migration. Branch migration allows RuvC to scan DNA until it finds its consensus sequence, where it cleaves and resolves cruciform DNA. The polypeptide is Holliday junction branch migration complex subunit RuvB (Acholeplasma laidlawii (strain PG-8A)).